A 316-amino-acid chain; its full sequence is MPMQGAQRKLLGSLNSTPTATSNLGLAANHTGAPCLEVSIPDGLFLSLGLVSLVENVLVVAAIAKNRNLHSSMYCFICCLALSDLLVSGSNMLETAVILLLETGALATRTSVVQQLHNTINVLTCSSMLCSLCFLGAIAVDRYISIFYALRYHSIMTLPRAQRAIAAIWVASVLSSTLFITYYDHAAVLLCLVVFFLAMLVLMAVLYVHMLARACQHAHGIIRLHKRQTPAHQAFGLRGAATLTILLGIFFLCWGPFFLHLTLVVFCPQHLTCSCIFKNFKVFLTLIICNTIIDPLIYAFRSQELRRTLKEVLCSW.

Over 1 to 37 (MPMQGAQRKLLGSLNSTPTATSNLGLAANHTGAPCLE) the chain is Extracellular. Asparagine 29 carries N-linked (GlcNAc...) asparagine glycosylation. Residues 38–63 (VSIPDGLFLSLGLVSLVENVLVVAAI) form a helical membrane-spanning segment. Residues 64-72 (AKNRNLHSS) are Cytoplasmic-facing. A helical membrane pass occupies residues 73-93 (MYCFICCLALSDLLVSGSNML). The Extracellular portion of the chain corresponds to 94 to 118 (ETAVILLLETGALATRTSVVQQLHN). The chain crosses the membrane as a helical span at residues 119–140 (TINVLTCSSMLCSLCFLGAIAV). The Cytoplasmic portion of the chain corresponds to 141-163 (DRYISIFYALRYHSIMTLPRAQR). A helical transmembrane segment spans residues 164-183 (AIAAIWVASVLSSTLFITYY). Residues 184 to 191 (DHAAVLLC) lie on the Extracellular side of the membrane. The helical transmembrane segment at 192–211 (LVVFFLAMLVLMAVLYVHML) threads the bilayer. Topologically, residues 212 to 240 (ARACQHAHGIIRLHKRQTPAHQAFGLRGA) are cytoplasmic. A helical transmembrane segment spans residues 241–266 (ATLTILLGIFFLCWGPFFLHLTLVVF). Residues 267–279 (CPQHLTCSCIFKN) lie on the Extracellular side of the membrane. The chain crosses the membrane as a helical span at residues 280–300 (FKVFLTLIICNTIIDPLIYAF). The Cytoplasmic portion of the chain corresponds to 301 to 316 (RSQELRRTLKEVLCSW). The S-palmitoyl cysteine moiety is linked to residue cysteine 314.

It belongs to the G-protein coupled receptor 1 family. In terms of assembly, interacts with MGRN1, but does not undergo MGRN1-mediated ubiquitination; this interaction competes with GNAS-binding and thus inhibits agonist-induced cAMP production. Interacts with OPN3; the interaction results in a decrease in MC1R-mediated cAMP signaling and ultimately a decrease in melanin production in melanocytes.

It localises to the cell membrane. Its function is as follows. Receptor for MSH (alpha, beta and gamma) and ACTH. The activity of this receptor is mediated by G proteins which activate adenylate cyclase. Mediates melanogenesis, the production of eumelanin (black/brown) and phaeomelanin (red/yellow), via regulation of cAMP signaling in melanocytes. In Saguinus geoffroyi (Geoffroy's tamarin), this protein is Melanocyte-stimulating hormone receptor (MC1R).